The primary structure comprises 78 residues: Beta-defensin 12 (78 aa).

The signal sequence occupies residues 1 to 27 (MALSRGTFYFGLALFFIVVELPSGSWA). Disulfide bonds link Cys-46–Cys-73, Cys-53–Cys-67, and Cys-57–Cys-74.

It belongs to the beta-defensin family.

It is found in the secreted. Functionally, has antibacterial activity. This is Beta-defensin 12 (Defb12) from Rattus norvegicus (Rat).